Consider the following 412-residue polypeptide: MTTTQVLLDSLLANKASINLATTEQKNQALSAMADQLVAQTEAILAGNAIDMEHAQGKISQVMQDRLLLTEERIEAMADGIRALIGLPDPVGLVLEESTRADGLNICKKSIPFGLVGMIYESRPNVTSDAAALAIKSGNAVILRGGKEAFHSAKAIVTALKSGLEEAGVSPKVIELVQDTSRVSATELMTAKGKIDLLVPRGGAGLIQAVVENATVPVIETGTGICHVYVDKDADLDKALRIVVNAKTSRPSVCNAAEVLLVHEEIASQFLPRLEEALSGQVELRADSQAQALLNQARPAGDQDFDTEFLDYIMAVKVVSSVEEAISHIAQHSTGHSEAIVTENSQTAEHFTLHVDSAAVYVNASTRFTDGGEFGLGCELGISTQKMHARGPMGLREMTTYKYIITGDGHIR.

Belongs to the gamma-glutamyl phosphate reductase family.

The protein localises to the cytoplasm. The enzyme catalyses L-glutamate 5-semialdehyde + phosphate + NADP(+) = L-glutamyl 5-phosphate + NADPH + H(+). The protein operates within amino-acid biosynthesis; L-proline biosynthesis; L-glutamate 5-semialdehyde from L-glutamate: step 2/2. Functionally, catalyzes the NADPH-dependent reduction of L-glutamate 5-phosphate into L-glutamate 5-semialdehyde and phosphate. The product spontaneously undergoes cyclization to form 1-pyrroline-5-carboxylate. In Streptococcus suis (strain 98HAH33), this protein is Gamma-glutamyl phosphate reductase.